The sequence spans 131 residues: Translation initiation factor 5A (131 aa).

Lys-36 carries the hypusine modification.

This sequence belongs to the eIF-5A family.

It localises to the cytoplasm. Functions by promoting the formation of the first peptide bond. The polypeptide is Translation initiation factor 5A (eIF5A) (Metallosphaera sedula (strain ATCC 51363 / DSM 5348 / JCM 9185 / NBRC 15509 / TH2)).